The chain runs to 60 residues: Large ribosomal subunit protein uL30 (60 aa).

Belongs to the universal ribosomal protein uL30 family. In terms of assembly, part of the 50S ribosomal subunit.

This chain is Large ribosomal subunit protein uL30, found in Thermus thermophilus (strain ATCC BAA-163 / DSM 7039 / HB27).